Reading from the N-terminus, the 513-residue chain is ATP synthase subunit alpha (513 aa).

Residue 169–176 (GDRQTGKT) coordinates ATP.

It belongs to the ATPase alpha/beta chains family. As to quaternary structure, F-type ATPases have 2 components, CF(1) - the catalytic core - and CF(0) - the membrane proton channel. CF(1) has five subunits: alpha(3), beta(3), gamma(1), delta(1), epsilon(1). CF(0) has three main subunits: a(1), b(2) and c(9-12). The alpha and beta chains form an alternating ring which encloses part of the gamma chain. CF(1) is attached to CF(0) by a central stalk formed by the gamma and epsilon chains, while a peripheral stalk is formed by the delta and b chains.

The protein resides in the cell inner membrane. It catalyses the reaction ATP + H2O + 4 H(+)(in) = ADP + phosphate + 5 H(+)(out). Produces ATP from ADP in the presence of a proton gradient across the membrane. The alpha chain is a regulatory subunit. This Methylobacillus flagellatus (strain ATCC 51484 / DSM 6875 / VKM B-1610 / KT) protein is ATP synthase subunit alpha.